Reading from the N-terminus, the 244-residue chain is Multiple organellar RNA editing factor 3, mitochondrial (244 aa).

The transit peptide at Met1 to Lys62 directs the protein to the mitochondrion. Disordered stretches follow at residues Thr59–Pro82 and Tyr196–Ala244. Residues Arg60–Asn80 show a composition bias toward polar residues. Residues Pro210–Pro226 show a composition bias toward basic and acidic residues.

The protein belongs to the MORF family. In terms of assembly, heterodimer with MORF1. Homodimer and heterodimers with MORF8/RIP1, MORF4/RIP4 and MORF5/RIP5.

The protein resides in the mitochondrion. In terms of biological role, involved in organellar RNA editing. Required for the processing of RNA editing sites in mitochondria. The sequence is that of Multiple organellar RNA editing factor 3, mitochondrial from Arabidopsis thaliana (Mouse-ear cress).